Reading from the N-terminus, the 601-residue chain is MSTFVISNSMHVGISFSFLHKLPQTPPPQVVCCSGGLRLRPSCSLQLQPPPTTRRSGNYEPSAWDFNYLQSLNNYHHKEERYLRRQADLIEKVKMILKEEKMEALQQLELIDDLRNLGLSYCFDDQINHILTTIYNQHSCFHYHEAATSEEANLYFTALGFRLLREHGFKVSQEVFDRFKNEKGTDFRPDLVDDTQGLLQLYEASFLLREGEDTLEFARQFATKFLQKKVEEKMIEEENLLSWTLHSLELPLHWRIQRLEAKWFLDAYASRPDMNPIIFELAKLEFNIAQALQQEELKDLSRWWNDTGIAEKLPFARDRIVESHYWAIGTLEPYQYRYQRSLIAKIIALTTVVDDVYDVYGTLDELQLFTDAIRRWDIESINQLPSYMQLCYLAIYNFVSELAYDIFRDKGFNSLPYLHKSWLDLVEAYFQEAKWYHSGYTPSLEQYLNIAQISVASPAILSQIYFTMAGSIDKPVIESMYKYRHILNLSGILLRLPDDLGTASDELGRGDLAKAMQCYMKERNVSEEEARDHVRFLNREVSKQMNPARAADDCPFTDDFVVAAANLGRVADFMYVEGDGLGLQYPAIHQHMAELLFHPYA.

The N-terminal 32 residues, 1-32, are a transit peptide targeting the chloroplast; the sequence is MSTFVISNSMHVGISFSFLHKLPQTPPPQVVC. Residues aspartate 354, aspartate 358, aspartate 498, threonine 502, and glutamate 506 each contribute to the Mg(2+) site. The DDXXD motif motif lies at 354–358; sequence DDVYD.

It belongs to the terpene synthase family. Tpsd subfamily. The cofactor is Mg(2+). Requires Mn(2+) as cofactor.

It is found in the plastid. The protein resides in the chloroplast. It catalyses the reaction (2E)-geranyl diphosphate = terpinolene + diphosphate. It participates in secondary metabolite biosynthesis; terpenoid biosynthesis. Monoterpene synthase that catalyzes the formation of terpinolene and other monoterpenes from geranyl diphosphate. This Ocimum basilicum (Sweet basil) protein is Terpinolene synthase, chloroplastic (TES).